Consider the following 404-residue polypeptide: Coenzyme F420H(2) oxidase (404 aa).

Residues H83, E85, D87, H88, H151, D170, and H233 each contribute to the Fe cation site. Positions 259–399 (VTVIYDTMHG…ACFEAGRKLA (141 aa)) constitute a Flavodoxin-like domain. FMN is bound by residues 265 to 270 (TMHGST), 317 to 320 (TIYD), and 351 to 356 (SMGGNG).

The protein in the N-terminal section; belongs to the zinc metallo-hydrolase group 3 family. Homodimer. Homotetramer. The tetramer is composed of two functional dimers. The cofactor is FMN. It depends on Fe cation as a cofactor.

The enzyme catalyses 2 reduced coenzyme F420-(gamma-L-Glu)(n) + O2 = 2 oxidized coenzyme F420-(gamma-L-Glu)(n) + 2 H2O + 2 H(+). In terms of biological role, catalyzes the oxidation of F420H(2) with O(2). May be involved in O(2) detoxification, reducing the intracellular O(2) concentration to a level allowing growth at the expense of methane formation. In Methanothermobacter marburgensis (strain ATCC BAA-927 / DSM 2133 / JCM 14651 / NBRC 100331 / OCM 82 / Marburg) (Methanobacterium thermoautotrophicum), this protein is Coenzyme F420H(2) oxidase.